The primary structure comprises 588 residues: DNA ligase (588 aa).

Glutamate 248 lines the ATP pocket. Lysine 250 serves as the catalytic N6-AMP-lysine intermediate. ATP-binding residues include arginine 255, arginine 270, glutamate 300, phenylalanine 341, arginine 418, and lysine 424.

It belongs to the ATP-dependent DNA ligase family. Requires Mg(2+) as cofactor.

The catalysed reaction is ATP + (deoxyribonucleotide)n-3'-hydroxyl + 5'-phospho-(deoxyribonucleotide)m = (deoxyribonucleotide)n+m + AMP + diphosphate.. DNA ligase that seals nicks in double-stranded DNA during DNA replication, DNA recombination and DNA repair. In Thermoplasma volcanium (strain ATCC 51530 / DSM 4299 / JCM 9571 / NBRC 15438 / GSS1), this protein is DNA ligase.